We begin with the raw amino-acid sequence, 225 residues long: 2-C-methyl-D-erythritol 4-phosphate cytidylyltransferase (225 aa).

Belongs to the IspD/TarI cytidylyltransferase family. IspD subfamily.

The enzyme catalyses 2-C-methyl-D-erythritol 4-phosphate + CTP + H(+) = 4-CDP-2-C-methyl-D-erythritol + diphosphate. The protein operates within isoprenoid biosynthesis; isopentenyl diphosphate biosynthesis via DXP pathway; isopentenyl diphosphate from 1-deoxy-D-xylulose 5-phosphate: step 2/6. In terms of biological role, catalyzes the formation of 4-diphosphocytidyl-2-C-methyl-D-erythritol from CTP and 2-C-methyl-D-erythritol 4-phosphate (MEP). The polypeptide is 2-C-methyl-D-erythritol 4-phosphate cytidylyltransferase (Clostridium perfringens (strain ATCC 13124 / DSM 756 / JCM 1290 / NCIMB 6125 / NCTC 8237 / Type A)).